Reading from the N-terminus, the 475-residue chain is tRNA-2-methylthio-N(6)-dimethylallyladenosine synthase (475 aa).

An MTTase N-terminal domain is found at 3-120 (KKLHIKTWGC…LPEMIDQIKD (118 aa)). Residues C12, C49, C83, C157, C161, and C164 each contribute to the [4Fe-4S] cluster site. One can recognise a Radical SAM core domain in the interval 143-375 (RAEGPSAFVS…QDRITQQAMR (233 aa)). The region spanning 378–441 (RQMVGTVQRI…TNSLRGVFIR (64 aa)) is the TRAM domain.

Belongs to the methylthiotransferase family. MiaB subfamily. As to quaternary structure, monomer. Requires [4Fe-4S] cluster as cofactor.

It is found in the cytoplasm. It catalyses the reaction N(6)-dimethylallyladenosine(37) in tRNA + (sulfur carrier)-SH + AH2 + 2 S-adenosyl-L-methionine = 2-methylsulfanyl-N(6)-dimethylallyladenosine(37) in tRNA + (sulfur carrier)-H + 5'-deoxyadenosine + L-methionine + A + S-adenosyl-L-homocysteine + 2 H(+). Its function is as follows. Catalyzes the methylthiolation of N6-(dimethylallyl)adenosine (i(6)A), leading to the formation of 2-methylthio-N6-(dimethylallyl)adenosine (ms(2)i(6)A) at position 37 in tRNAs that read codons beginning with uridine. The chain is tRNA-2-methylthio-N(6)-dimethylallyladenosine synthase from Shewanella pealeana (strain ATCC 700345 / ANG-SQ1).